Reading from the N-terminus, the 365-residue chain is Saoe class I histocompatibility antigen, C alpha chain (365 aa).

Positions 1-24 are cleaved as a signal peptide; that stretch reads MTIMAPRTLLLLLSGALSVTETWA. Positions 25–114 are alpha-1; the sequence is GSHSMRYFST…LLGYYNQSEA (90 aa). The Extracellular segment spans residues 25–308; the sequence is GSHSMRYFST…EPPSQPTIPI (284 aa). The N-linked (GlcNAc...) asparagine glycan is linked to N110. The interval 115–206 is alpha-2; that stretch reads GFHTIQWMYG…ENGKEMLQRA (92 aa). 2 cysteine pairs are disulfide-bonded: C125/C188 and C227/C283. The tract at residues 207-298 is alpha-3; sequence EPPKTHVTHH…GLPEPFTLRW (92 aa). Residues 209 to 297 enclose the Ig-like C1-type domain; that stretch reads PKTHVTHHPV…EGLPEPFTLR (89 aa). Positions 299 to 308 are connecting peptide; sequence EPPSQPTIPI. Residues 309–332 form a helical membrane-spanning segment; it reads MGIVAILAILGAVVTGAVVAAVMW. The Cytoplasmic segment spans residues 333–365; the sequence is RKKSSDKKGGSYSQAARSDSAQGSDVSLTACKV. Residues 337–365 are disordered; that stretch reads SDKKGGSYSQAARSDSAQGSDVSLTACKV. A compositionally biased stretch (polar residues) spans 346–359; the sequence is QAARSDSAQGSDVS. Phosphoserine is present on residues S356 and S359.

The protein belongs to the MHC class I family. In terms of assembly, heterodimer of an alpha chain and a beta chain (beta-2-microglobulin).

The protein resides in the membrane. Involved in the presentation of foreign antigens to the immune system. This Saguinus oedipus (Cotton-top tamarin) protein is Saoe class I histocompatibility antigen, C alpha chain.